The sequence spans 458 residues: Alpha-2C adrenergic receptor (458 aa).

The Extracellular portion of the chain corresponds to 1-51 (MASPALAAALAAAAAEGPNGSDAGEWGSGGGANASGTDWVPPPGQYSAGAV). N-linked (GlcNAc...) asparagine glycans are attached at residues Asn19 and Asn33. A helical membrane pass occupies residues 52-76 (AGLAAVVGFLIVFTVVGNVLVVIAV). Residues 77 to 88 (LTSRALRAPQNL) lie on the Cytoplasmic side of the membrane. A helical membrane pass occupies residues 89–114 (FLVSLASADILVATLVMPFSLANELM). Over 115–124 (AYWYFGQVWC) the chain is Extracellular. Residues Cys124 and Cys202 are joined by a disulfide bond. The chain crosses the membrane as a helical span at residues 125–147 (GVYLALDVLFCTSSIVHLCAISL). At 148–168 (DRYWSVTQAVEYNLKRTPRRV) the chain is on the cytoplasmic side. Residues 169 to 191 (KATIVAVWLISAVISFPPLVSFY) traverse the membrane as a helical segment. The Extracellular segment spans residues 192 to 207 (RRPDGAAYPQCGLNDE). The helical transmembrane segment at 208-231 (TWYILSSCIGSFFAPCLIMGLVYA) threads the bilayer. Topologically, residues 232 to 379 (RIYRVAKLRT…QAREKRFTFV (148 aa)) are cytoplasmic. The disordered stretch occupies residues 245–343 (SEKRGPAGPD…SPGPGGRLSR (99 aa)). Basic residues predominate over residues 291–303 (RRRRRGALRRGGR). The helical transmembrane segment at 380-403 (LAVVMGVFVLCWFPFFFSYSLYGI) threads the bilayer. Over 404-416 (CREACQLPEPLFK) the chain is Extracellular. A helical membrane pass occupies residues 417–437 (FFFWIGYCNSSLNPVIYTVFN). Over 438 to 458 (QDFRRSFKHILFRRRRRGFRQ) the chain is Cytoplasmic.

It belongs to the G-protein coupled receptor 1 family. Adrenergic receptor subfamily. ADRA2C sub-subfamily.

Its subcellular location is the cell membrane. Its function is as follows. Alpha-2 adrenergic receptors mediate the catecholamine-induced inhibition of adenylate cyclase through the action of G proteins. The polypeptide is Alpha-2C adrenergic receptor (Adra2c) (Mus musculus (Mouse)).